A 190-amino-acid polypeptide reads, in one-letter code: Adenine phosphoribosyltransferase (190 aa).

The protein belongs to the purine/pyrimidine phosphoribosyltransferase family. Homodimer.

Its subcellular location is the cytoplasm. The catalysed reaction is AMP + diphosphate = 5-phospho-alpha-D-ribose 1-diphosphate + adenine. It functions in the pathway purine metabolism; AMP biosynthesis via salvage pathway; AMP from adenine: step 1/1. Its function is as follows. Catalyzes a salvage reaction resulting in the formation of AMP, that is energically less costly than de novo synthesis. This Treponema denticola (strain ATCC 35405 / DSM 14222 / CIP 103919 / JCM 8153 / KCTC 15104) protein is Adenine phosphoribosyltransferase.